A 1198-amino-acid polypeptide reads, in one-letter code: Fibronectin type-III domain-containing protein 3a (1198 aa).

The span at 189-201 shows a compositional bias: basic and acidic residues; sequence KLKDRHGTQKDKL. The disordered stretch occupies residues 189–256; it reads KLKDRHGTQK…SQTDVEIEEK (68 aa). The span at 229-247 shows a compositional bias: low complexity; sequence GISTGSTKSKSVGKGKSNS. Fibronectin type-III domains are found at residues 269–370, 374–466, 470–563, 567–661, 665–758, 762–852, 864–951, 952–1045, and 1046–1151; these read NIAK…TMSC, APNL…TSGT, TPAS…TCPD, APSK…TPAV, PCQP…TAPG, QCKP…TPAS, SEDE…TKPL, PPDP…TPKS, and VPAA…TEPP. The segment at 553–574 is disordered; that stretch reads SETVDYTTCPDKPGAPSKPSVK. The chain crosses the membrane as a helical span at residues 1172-1192; that stretch reads VCAAVILALFAIFSILIAVII.

Belongs to the FNDC3 family.

It is found in the golgi apparatus membrane. The sequence is that of Fibronectin type-III domain-containing protein 3a (FNDC3A) from Gallus gallus (Chicken).